The chain runs to 59 residues: Toxin TxpA (59 aa).

A helical transmembrane segment spans residues 7–27; it reads LMVMIGFANLIGGIMTWVISL.

Its subcellular location is the cell membrane. Its function is as follows. Toxic component of a type I toxin-antitoxin (TA) system. Overexpression of txpA causes cell lysis; the TxpA protein has been suggested to act on the cell membrane or might possibly block cell wall synthesis. Overexpression in E.coli is not toxic. This Bacillus subtilis (strain 168) protein is Toxin TxpA.